Consider the following 212-residue polypeptide: Ribonuclease HII (212 aa).

Residues 7–212 (SQILGIDEAG…TIENITKSTE (206 aa)) form the RNase H type-2 domain. Residues Asp-13, Glu-14, and Asp-111 each contribute to the a divalent metal cation site.

The protein belongs to the RNase HII family. The cofactor is Mn(2+). Requires Mg(2+) as cofactor.

It is found in the cytoplasm. It catalyses the reaction Endonucleolytic cleavage to 5'-phosphomonoester.. Endonuclease that specifically degrades the RNA of RNA-DNA hybrids. The chain is Ribonuclease HII from Methanosphaera stadtmanae (strain ATCC 43021 / DSM 3091 / JCM 11832 / MCB-3).